The sequence spans 341 residues: Phenylalanine--tRNA ligase alpha subunit (341 aa).

Glu256 lines the Mg(2+) pocket.

It belongs to the class-II aminoacyl-tRNA synthetase family. Phe-tRNA synthetase alpha subunit type 1 subfamily. In terms of assembly, tetramer of two alpha and two beta subunits. Mg(2+) serves as cofactor.

The protein localises to the cytoplasm. It carries out the reaction tRNA(Phe) + L-phenylalanine + ATP = L-phenylalanyl-tRNA(Phe) + AMP + diphosphate + H(+). This Leptospira biflexa serovar Patoc (strain Patoc 1 / Ames) protein is Phenylalanine--tRNA ligase alpha subunit.